Here is a 499-residue protein sequence, read N- to C-terminus: Glycerol kinase (499 aa).

Thr12 lines the ADP pocket. Residues Thr12, Thr13, and Ser14 each contribute to the ATP site. Thr12 lines the sn-glycerol 3-phosphate pocket. Residue Arg16 coordinates ADP. Residues Arg82, Glu83, and Tyr134 each contribute to the sn-glycerol 3-phosphate site. Glycerol is bound by residues Arg82, Glu83, and Tyr134. The residue at position 230 (His230) is a Phosphohistidine; by HPr. A sn-glycerol 3-phosphate-binding site is contributed by Asp244. Residues Asp244 and Gln245 each contribute to the glycerol site. ADP is bound by residues Thr266 and Gly309. Positions 266, 309, 313, and 410 each coordinate ATP. Gly410 and Asn414 together coordinate ADP.

Belongs to the FGGY kinase family. As to quaternary structure, homotetramer and homodimer (in equilibrium). The phosphoenolpyruvate-dependent sugar phosphotransferase system (PTS), including enzyme I, and histidine-containing protein (HPr) are required for the phosphorylation, which leads to the activation of the enzyme.

It catalyses the reaction glycerol + ATP = sn-glycerol 3-phosphate + ADP + H(+). Its pathway is polyol metabolism; glycerol degradation via glycerol kinase pathway; sn-glycerol 3-phosphate from glycerol: step 1/1. With respect to regulation, activated by phosphorylation and inhibited by fructose 1,6-bisphosphate (FBP). In terms of biological role, key enzyme in the regulation of glycerol uptake and metabolism. Catalyzes the phosphorylation of glycerol to yield sn-glycerol 3-phosphate. The sequence is that of Glycerol kinase from Staphylococcus haemolyticus (strain JCSC1435).